A 274-amino-acid chain; its full sequence is Tryptase beta-2 (274 aa).

The signal sequence occupies residues 1–19; that stretch reads MLKLLLLLALSPLASLVHA. The propeptide at 20–29 is activation peptide; it reads APCPVKQRVG. A Peptidase S1 domain is found at 30 to 271; it reads IVGGREASES…YLDWIHRYVP (242 aa). A disulfide bridge connects residues cysteine 58 and cysteine 74. Residue histidine 73 is the Charge relay system of the active site. Position 96 is a phosphotyrosine (tyrosine 96). A glycan (N-linked (GlcNAc...) asparagine) is linked at asparagine 104. Catalysis depends on aspartate 120, which acts as the Charge relay system. Asparagine 131 carries N-linked (GlcNAc...) asparagine glycosylation. 3 disulfides stabilise this stretch: cysteine 154–cysteine 229, cysteine 187–cysteine 210, and cysteine 219–cysteine 247. Serine 223 functions as the Charge relay system in the catalytic mechanism.

The protein belongs to the peptidase S1 family. Tryptase subfamily. In terms of assembly, homotetramer. The active tetramer is converted to inactive monomers at neutral and acidic pH in the absence of heparin. Low concentrations of inactive monomers become active monomers at pH 6.0 in the presence of heparin. When the concentration of active monomers is higher, they convert to active monomers and then to active tetramers. These monomers are active and functionally distinct from the tetrameric enzyme. In contrast to the hidden active sites in the tetrameric form, the active site of the monomeric form is accessible for macromolecular proteins and inhibitors, e.g. fibrinogen which is a substrate for the monomeric but not for the tetrameric form. The monomeric form forms a complex with SERPINB6.

It is found in the secreted. The enzyme catalyses Preferential cleavage: Arg-|-Xaa, Lys-|-Xaa, but with more restricted specificity than trypsin.. Its function is as follows. Tryptase is the major neutral protease present in mast cells and is secreted upon the coupled activation-degranulation response of this cell type. Plays a role in innate immunity. The sequence is that of Tryptase beta-2 (Tpsb2) from Rattus norvegicus (Rat).